The chain runs to 784 residues: MGSGDWDEIKRLAADFQKAQLTSTLQKLSERNCVEIVTLLLEKQMLEVVFTNDGKEYITPDHLEREIQDELYVNGGRANLVEVSKTLNVDLSRIEVLAERIAAENPSVHLVLGQLIDEDYISHIAQEINEKLVLRGEISISELASQFDLPSDFLQHDVVEKHLGKIIKGRQDASNPRVFFTQAYIQRCKAKIRGALAAITRPINVAVILQQIGVQEKIFHSLLDEIAPAGQVTSKLANSQYVPLIYAKTQADWVNSFYKQNSFLEYDAIQKLGISDAKSYIRKQFPNEEFLFLKRVALGARLVELTVVTALNECSATKQYLDLTTILPSNLSEEDIEEVFSTIMGQKHSNPNNFVYLDSIVFSQPYLAQLVQPCQALAESQAKAAVDGGVYQQYIVEKTLAQKGSVSTQELEDDGKVDKRDERRKKASSGKAGGGAQGRETKTKSTKKHQRGKAAAHNDSDDEDDVQQSSRGGGAGNKKAMKPLELVKTADIVKLITASLEEEGLEHLAKPISALYTNQFNQTALARAQELFEATPQTNRRQTHAAIQDRINTFLIDIRLYEKGLKLFPLETQTQLVKYLLKSLGNDICNELSLYVAGECNLTVKNTNLNVDQRIKLAQECEVQYRASLLEQNKALNKTIDEFELATETVLKACSMIIKKVDKKKDRLLIADHKKKLQNQLLECQEPALLLHLAVLILFTTITGSILHASGKFVSAILQHIRGSLNDEQNALLLRYHDLVLQVLQATPDSSESKVANEHLQAMQVQVVELAQNFSRASVFKADC.

Residues Ser-405–Ala-480 are disordered. Residues Lys-444–Ala-454 are compositionally biased toward basic residues.

The protein belongs to the UFL1 family.

In terms of biological role, E3 UFM1-protein ligase that mediates ufmylation of target proteins. This Drosophila yakuba (Fruit fly) protein is E3 UFM1-protein ligase 1 homolog.